The following is a 727-amino-acid chain: Platelet endothelial cell adhesion molecule (727 aa).

The signal sequence occupies residues 1–17 (MLLALGLTLVLYASLQA). Over 18–590 (EENSFTINSI…VRVFLAPWKK (573 aa)) the chain is Extracellular. Ig-like C2-type domains lie at 40 to 126 (GQQL…PKVT), 135 to 213 (GGVV…PIRS), 225 to 309 (PKFE…IMVN), 315 to 391 (PKPK…LVPI), 413 to 472 (GHAI…NCHS), and 488 to 578 (PVDE…RSST). Cysteines 47 and 99 form a disulfide. 2 N-linked (GlcNAc...) asparagine glycosylation sites follow: Asn74 and Asn141. 2 disulfides stabilise this stretch: Cys142-Cys195 and Cys245-Cys293. Asn309, Asn345, Asn360, Asn424, and Asn540 each carry an N-linked (GlcNAc...) asparagine glycan. Cystine bridges form between Cys336–Cys375, Cys420–Cys465, and Cys512–Cys561. Residues 591–609 (GLIAVVVIGVVIATLIVAA) traverse the membrane as a helical segment. Residues 610-727 (KCYFLRKAKA…SRTEGSLNGT (118 aa)) are Cytoplasmic-facing. Cys611 carries S-palmitoyl cysteine lipidation. A disordered region spans residues 642 to 672 (SEPSVEANSHYGYDDVSGNDAVKPINQNKDP). 2 consecutive short sequence motifs (ITIM motif) follow at residues 677-682 (VEYTEV) and 700-705 (TVYSEI). 2 positions are modified to phosphotyrosine; by FER: Tyr679 and Tyr702. The segment at 698-718 (TETVYSEIRKVDPNLMENRYS) is membrane-bound segment which detaches upon phosphorylation. The interval 710–727 (PNLMENRYSRTEGSLNGT) is may play a role in cytoprotective signaling. A phosphoserine mark is found at Ser718 and Ser723.

In terms of assembly, trans-homodimer (via Ig-like C2-type 1 and Ig-like C2-type 2 domains); trans-homodimerization is required for cell-cell interaction. Forms a complex with BDKRB2 and GNAQ. Interacts with BDKRB2 and GNAQ. Interacts with PTPN11; Tyr-702 is critical for PTPN11 recruitment. Interacts with FER. Interacts with CD177; the interaction is Ca(2+)-dependent; the interaction is direct. In terms of processing, phosphorylated on Ser and Tyr residues by src kinases after cellular activation. Upon activation, phosphorylated on Ser-718 which probably initiates the dissociation of the membrane-interaction segment (residues 698-718) from the cell membrane allowing the sequential phosphorylation of Tyr-702 and Tyr-679. Constitutively phosphorylated on Ser-723 in resting platelets. Phosphorylated on tyrosine residues by FER and FES in response to FCER1 activation. In endothelial cells Fyn mediates mechanical-force (stretch or pull) induced tyrosine phosphorylation. Post-translationally, palmitoylation by ZDHHC21 is necessary for cell surface expression in endothelial cells and enrichment in membrane rafts. As to expression, expressed in lung and platelets (at protein level).

The protein localises to the cell membrane. The protein resides in the membrane raft. It localises to the cell junction. In terms of biological role, cell adhesion molecule which is required for leukocyte transendothelial migration (TEM) under most inflammatory conditions. Tyr-679 plays a critical role in TEM and is required for efficient trafficking of PECAM1 to and from the lateral border recycling compartment (LBRC) and is also essential for the LBRC membrane to be targeted around migrating leukocytes. Trans-homophilic interaction may play a role in endothelial cell-cell adhesion via cell junctions. Heterophilic interaction with CD177 plays a role in transendothelial migration of neutrophils. Homophilic ligation of PECAM1 prevents macrophage-mediated phagocytosis of neighboring viable leukocytes by transmitting a detachment signal. Promotes macrophage-mediated phagocytosis of apoptotic leukocytes by tethering them to the phagocytic cells; PECAM1-mediated detachment signal appears to be disabled in apoptotic leukocytes. Modulates bradykinin receptor BDKRB2 activation. Regulates bradykinin- and hyperosmotic shock-induced ERK1/2 activation in endothelial cells. Induces susceptibility to atherosclerosis. The sequence is that of Platelet endothelial cell adhesion molecule (Pecam1) from Mus musculus (Mouse).